A 336-amino-acid chain; its full sequence is MVLVIEIIRKHLPRVLKVPATRILLLVLAVIIYGTAGFHFIEGESWTVSLYWTFVTIATVGYGDYSPSTPLGMYFTVTLIVLGIGTFAVAVERLLEFLINREQMKLMGLIDVAKSRHVVICGWSESTLECLRELRGSEVFVLAEDENVRKKVLRSGANFVHGDPTRVSDLEKANVRGARAVIVDLESDSETIHCILGIRKIDESVRIIAEAERYENIEQLRMAGADQVISPFVISGRLMSRSIDDGYEAMFVQDVLAEESTRRMVEVPIPEGSKLEGVSVLDADIHDVTGVIIIGVGRGDELIIDPPRDYSFRAGDIILGIGKPEEIERLKNYISA.

The Cytoplasmic segment spans residues 1–20 (MVLVIEIIRKHLPRVLKVPA). Residues 21 to 41 (TRILLLVLAVIIYGTAGFHFI) form a helical membrane-spanning segment. At 42-48 (EGESWTV) the chain is on the extracellular side. The helical; Pore-forming intramembrane region spans 49–58 (SLYWTFVTIA). The pore-forming intramembrane region spans 59 to 64 (TVGYGD). Residues 59-64 (TVGYGD) carry the Selectivity filter motif. Over 65-69 (YSPST) the chain is Extracellular. The chain crosses the membrane as a helical span at residues 70–95 (PLGMYFTVTLIVLGIGTFAVAVERLL). Residues 96 to 106 (EFLINREQMKL) are Cytoplasmic-facing. Positions 115 to 230 (SRHVVICGWS…RMAGADQVIS (116 aa)) constitute an RCK N-terminal domain. Positions 184, 210, and 212 each coordinate Ca(2+). Residues 252–336 (VQDVLAEEST…IERLKNYISA (85 aa)) form the RCK C-terminal domain.

In terms of assembly, homotetramer.

It localises to the cell membrane. Its function is as follows. Calcium-gated potassium channel. The protein is Calcium-gated potassium channel MthK (mthK) of Methanothermobacter thermautotrophicus (strain ATCC 29096 / DSM 1053 / JCM 10044 / NBRC 100330 / Delta H) (Methanobacterium thermoautotrophicum).